The sequence spans 226 residues: uncharacterized protein (226 aa).

Positions 18–219 (LTIRNYTETD…YGVLMEWKNV (202 aa)) constitute an N-acetyltransferase domain.

The protein belongs to the acetyltransferase family.

This is an uncharacterized protein from Bacillus subtilis (strain 168).